A 43-amino-acid chain; its full sequence is Protein PsbN (43 aa).

Residues 5–27 (TLIAIFISCSLVSFTGYALYTAF) form a helical membrane-spanning segment.

It belongs to the PsbN family.

The protein resides in the plastid. The protein localises to the chloroplast thylakoid membrane. Functionally, may play a role in photosystem I and II biogenesis. This is Protein PsbN from Lopidium concinnum (Moss).